The chain runs to 125 residues: Probable endoribonuclease HigB1 (125 aa).

The protein belongs to the mycobacterial HigB family.

Its function is as follows. Toxic component of an atypical, type II toxin-antitoxin chaperone (TAC) system. Probably an endoribonuclease, neutralized by its cognate antitoxin HigA which also requires SecB-like chaperone MT2006 (AC Q7D7P7). The polypeptide is Probable endoribonuclease HigB1 (Mycobacterium tuberculosis (strain CDC 1551 / Oshkosh)).